The chain runs to 276 residues: Type II pantothenate kinase (276 aa).

ATP is bound at residue 8 to 15 (DAGGTLTK). Glu-76 functions as the Proton acceptor in the catalytic mechanism. Residues Thr-105, 127–131 (GGTIM), Phe-143, and Ser-230 each bind ATP.

It belongs to the type II pantothenate kinase family. As to quaternary structure, homodimer.

Its subcellular location is the cytoplasm. It carries out the reaction (R)-pantothenate + ATP = (R)-4'-phosphopantothenate + ADP + H(+). The protein operates within cofactor biosynthesis; coenzyme A biosynthesis; CoA from (R)-pantothenate: step 1/5. Functionally, catalyzes the phosphorylation of pantothenate (Pan), the first step in CoA biosynthesis. The polypeptide is Type II pantothenate kinase (Bacillus anthracis).